A 185-amino-acid polypeptide reads, in one-letter code: MNPHNVKYLAKILCLKAEIQKNPYAVISKDVVHRYSTDIRYGDLTTIISVRHKTSTSNTVFQVFNESSVNYTPVDNDYGYPIIITSFLQTGHNKFPISFLYIDVVASDVFPKFARLSPTDVATVYSVLQIGDTKDALKLPRMLETEISAKILFHKDFPLKIVRFFKNNMVTGEEISDRSLVAVLE.

It belongs to the poxviridae DNA-directed RNA polymerase 22 kDa subunit family. As to quaternary structure, the DNA-dependent RNA polymerase used for intermediate and late genes expression consists of eight subunits Rpo30/OPG66, Rpo7/OPG90, Rpo22/OPG103, Rpo147/OPG105, Rpo18/OPG119, Rpo19/OPG131, Rpo132/OPG151 and Rpo35/OPG156. The same holoenzyme, with the addition of the transcription-specificity factor OPG109, is used for early gene expression.

It is found in the virion. It carries out the reaction RNA(n) + a ribonucleoside 5'-triphosphate = RNA(n+1) + diphosphate. Part of the DNA-dependent RNA polymerase which catalyzes the transcription of viral DNA into RNA using the four ribonucleoside triphosphates as substrates. Responsible for the transcription of early, intermediate and late genes. DNA-dependent RNA polymerase associates with the early transcription factor (ETF), itself composed of OPG118 and OPG133, thereby allowing the early genes transcription. Late transcription, and probably also intermediate transcription, require newly synthesized RNA polymerase. The sequence is that of DNA-directed RNA polymerase 21 kDa subunit (OPG103) from Oryctolagus cuniculus (Rabbit).